Consider the following 327-residue polypeptide: ATPase GET3 (327 aa).

27 to 34 (KGGVGKTT) is an ATP binding site. Asp-56 is a catalytic residue. ATP contacts are provided by Glu-231 and Asn-258. Zn(2+)-binding residues include Cys-269 and Cys-272.

This sequence belongs to the arsA ATPase family. Homodimer. Component of the Golgi to ER traffic (GET) complex, which is composed of GET1, GET2 and GET3. Within the complex, GET1 and GET2 form a heterotetramer which is stabilized by phosphatidylinositol binding and which binds to the GET3 homodimer. Interacts with the chloride channel protein GEF1.

The protein localises to the cytoplasm. Its subcellular location is the endoplasmic reticulum. It is found in the golgi apparatus. Its function is as follows. ATPase required for the post-translational delivery of tail-anchored (TA) proteins to the endoplasmic reticulum. Recognizes and selectively binds the transmembrane domain of TA proteins in the cytosol. This complex then targets to the endoplasmic reticulum by membrane-bound receptors GET1 and GET2, where the tail-anchored protein is released for insertion. This process is regulated by ATP binding and hydrolysis. ATP binding drives the homodimer towards the closed dimer state, facilitating recognition of newly synthesized TA membrane proteins. ATP hydrolysis is required for insertion. Subsequently, the homodimer reverts towards the open dimer state, lowering its affinity for the GET1-GET2 receptor, and returning it to the cytosol to initiate a new round of targeting. Cooperates with the HDEL receptor ERD2 to mediate the ATP-dependent retrieval of resident ER proteins that contain a C-terminal H-D-E-L retention signal from the Golgi to the ER. Involved in low-level resistance to the oxyanions arsenite and arsenate, and in heat tolerance. This chain is ATPase GET3, found in Yarrowia lipolytica (strain CLIB 122 / E 150) (Yeast).